We begin with the raw amino-acid sequence, 399 residues long: MTNRVVLAYSGGLDTSVAIPYLAKMTGGEVVAVSLDLGQGGEDMESVRQRALDCGAVESIVIDAKDEFANDYCLPTIKANGMYMKQYPLVSAISRPLIVKHLVEAAKKHGGTHVSHGCTGKGNDQVRFEVGFRNLAPELQIIAPARDYAWTRDKAIAFAEEINLPIEQSKKSPFSIDQNVWGRAVETGFLEDLWNPPTKDLYSYTEDPALGNAPDEIIISFKAGVPVAIDGRPVTVLEAIEEMNRRAGAQGIGRLDMVEDRLVGIKSREVYEAPGAIALITAHQAMEDVTIERELARYKRGIDARWSEEVYDGLWYAPLKRSLDAFIENTQEHVTGDIRMVMHAGKCTVNGRRSEHSLYDFDLATYDTGDTFDQTLAKGFVELHGLSSKISNKRDREAQ.

8-16 (AYSGGLDTS) contacts ATP. Y87 contributes to the L-citrulline binding site. G117 serves as a coordination point for ATP. L-aspartate is bound by residues T119, N123, and D124. L-citrulline is bound at residue N123. 4 residues coordinate L-citrulline: R127, S175, E259, and Y271.

This sequence belongs to the argininosuccinate synthase family. Type 1 subfamily. Homotetramer.

Its subcellular location is the cytoplasm. The enzyme catalyses L-citrulline + L-aspartate + ATP = 2-(N(omega)-L-arginino)succinate + AMP + diphosphate + H(+). Its pathway is amino-acid biosynthesis; L-arginine biosynthesis; L-arginine from L-ornithine and carbamoyl phosphate: step 2/3. The sequence is that of Argininosuccinate synthase from Corynebacterium diphtheriae (strain ATCC 700971 / NCTC 13129 / Biotype gravis).